A 381-amino-acid chain; its full sequence is tRNA-specific 2-thiouridylase MnmA (381 aa).

ATP contacts are provided by residues 26–33 (AMSGGVDS) and Leu52. Residue Cys120 is the Nucleophile of the active site. A disulfide bridge connects residues Cys120 and Cys217. Residue Gly144 coordinates ATP. The segment at 166-168 (RDQ) is interaction with tRNA. Catalysis depends on Cys217, which acts as the Cysteine persulfide intermediate.

It belongs to the MnmA/TRMU family.

It localises to the cytoplasm. The catalysed reaction is S-sulfanyl-L-cysteinyl-[protein] + uridine(34) in tRNA + AH2 + ATP = 2-thiouridine(34) in tRNA + L-cysteinyl-[protein] + A + AMP + diphosphate + H(+). Catalyzes the 2-thiolation of uridine at the wobble position (U34) of tRNA, leading to the formation of s(2)U34. The chain is tRNA-specific 2-thiouridylase MnmA from Ruegeria sp. (strain TM1040) (Silicibacter sp.).